Consider the following 616-residue polypeptide: 2-[(L-alanin-3-ylcarbamoyl)methyl]-3-(2-aminoethylcarbamoyl)-2-hydroxypropanoate synthase (616 aa).

The protein belongs to the IucA/IucC family. As to quaternary structure, forms a mixture of monomer and dimer in solution.

The enzyme catalyses 2-[(2-aminoethylcarbamoyl)methyl]-2-hydroxybutanedioate + (S)-2,3-diaminopropanoate + ATP = 2-[(L-alanin-3-ylcarbamoyl)methyl]-3-(2-aminoethylcarbamoyl)-2-hydroxypropanoate + AMP + diphosphate. Its pathway is siderophore biosynthesis. Catalyzes the condensation of L-2,3-diaminopropionic acid (L-Dap) and citryl-diaminoethane to form L-2,3-diaminopropionyl-citryl-diaminoethane, the third step in staphyloferrin B biosynthesis. This is 2-[(L-alanin-3-ylcarbamoyl)methyl]-3-(2-aminoethylcarbamoyl)-2-hydroxypropanoate synthase from Staphylococcus aureus (strain NCTC 8325 / PS 47).